The following is a 503-amino-acid chain: uncharacterized protein (503 aa).

ABC transporter domains follow at residues 8–249 (VPVA…LGRD) and 261–499 (IVDQ…MSAI). 43–50 (GKNGAGKS) provides a ligand contact to ATP.

The protein belongs to the ABC transporter superfamily.

In terms of biological role, probably part of a binding-protein-dependent transport system YphDEF. Probably responsible for energy coupling to the transport system. This is an uncharacterized protein from Escherichia coli (strain K12).